A 429-amino-acid chain; its full sequence is MSKSLQAIRGMNDILPEQTPAWRYLERTFAGLLDGYGYSEIRLPILEFTELFARGIGEGTDVVDKEMYTFLDRNGESLTMRPEGTAGCVRAVLEHGLSGGGQVQKLWYTGPMFRYEKPQKGRYRQFHQIGVEVFNLPGPDIDAELIILTWRLWQKLGMADAVTLQLNTLGSSEARARYREALVAYLQERFEQLDEDSQRRMTTNPLRILDSKVESTQALLVGAPTLHDYLDEESIAHFEGLKARLDAVGLRYEINQKLVRGLDYYCRTAFEWVTDKLGAQGTVCGGGRYDGLVSQFGGKPTPGVGFAMGVERLVLLLETLDVIPAELNRPADLYVCAFGEPAELAALALAEQLRSSIPGIRLLVNAGAGSFKSQFKKADKSGARYALILGEDEVANRVVGFKPLRDEGEQQSIAWDALPEHLAACLAQA.

Belongs to the class-II aminoacyl-tRNA synthetase family. Homodimer.

It localises to the cytoplasm. The catalysed reaction is tRNA(His) + L-histidine + ATP = L-histidyl-tRNA(His) + AMP + diphosphate + H(+). The chain is Histidine--tRNA ligase from Pseudomonas paraeruginosa (strain DSM 24068 / PA7) (Pseudomonas aeruginosa (strain PA7)).